The primary structure comprises 991 residues: Collagenase ColT (991 aa).

The signal sequence occupies residues 1 to 28 (MKKKFIKMLCSIAIGCMISTSYSIKVSA). The propeptide occupies 29–52 (FSNGNTKTNPNGEFKSLSLNSTNP). The S1 metalloprotease domain, degrades FALGPA (furylacryloyl-Leu-Gly-Pro-Ala) stretch occupies residues 53–727 (YKTKYSFNDL…VYDIVFHGLL (675 aa)). The tract at residues 57–330 (YSFNDLNKLS…AIEAIKEDFN (274 aa)) is activator domain. Residues 340 to 611 (DINKLIEEGK…MENLVNNYDN (272 aa)) form a catalytic subdomain region. E440 lines the Ca(2+) pocket. H465 contacts Zn(2+). E466 is a catalytic residue. H469 contacts Zn(2+). Ca(2+) is bound by residues G473, I477, and G479. E499 is a binding site for Zn(2+). The tract at residues 619-731 (DDYMKQYDNK…VFHGLLSHNK (113 aa)) is helper subdomain. Collagen-binding domain stretches follow at residues 755–870 (IYEK…NISD) and 878–991 (IKKI…VIIN). E757, E759, N761, D784, D787, E883, E885, N887, D888, D910, and D913 together coordinate Ca(2+).

The protein belongs to the peptidase M9B family. Collagenase subfamily. It depends on Ca(2+) as a cofactor. Zn(2+) is required as a cofactor.

It localises to the secreted. The enzyme catalyses Digestion of native collagen in the triple helical region at Xaa-|-Gly bonds. With synthetic peptides, a preference is shown for Gly at P3 and P1', Pro and Ala at P2 and P2', and hydroxyproline, Ala or Arg at P3'.. Partially inhibited by 1-10-phenanthroline; inactivation is irreversible. Partially inhibited by EDTA; inactivation is reversible. Inhibited by broad-spectrum zinc metalloprotease inhibitor batimastat. N-aryl mercaptoacetamide-based inhibitors have been isolated that act on clostridial collagenases with submicromolar affinity while having negligibile activity on human collagenases. Functionally, clostridial collagenases are among the most efficient degraders of eukaryotic collagen known; saprophytes use collagen as a carbon source while pathogens additionally digest collagen to aid in host colonization. Has both tripeptidylcarboxypeptidase on Gly-X-Y and endopeptidase activities; the endopeptidase cuts within the triple helix region of collagen while tripeptidylcarboxypeptidase successively digests the exposed ends, thus clostridial collagenases can digest large sections of collagen. The activator domain (residues 57-330) and catalytic subdomain (340-611) open and close around substrate allowing digestion when the protein is closed. The chain is Collagenase ColT from Clostridium tetani (strain Massachusetts / E88).